Consider the following 351-residue polypeptide: Probable glucuronosyltransferase Os10g0205300 (351 aa).

At 1–11 (MAAPPCPPRRP) the chain is on the cytoplasmic side. The helical; Signal-anchor for type II membrane protein transmembrane segment at 12–32 (ISAPCFLLCFLLGFVAGLFPF) threads the bilayer. Residues 33–351 (AHRHLHLDLH…PLKKEARPLL (319 aa)) lie on the Lumenal side of the membrane. Positions 138-169 (SSPVPDAPQDRPRRRGRRQDRPAVDSRARQRN) are disordered. The span at 156 to 169 (QDRPAVDSRARQRN) shows a compositional bias: basic and acidic residues. A glycan (N-linked (GlcNAc...) asparagine) is linked at asparagine 259.

It belongs to the glycosyltransferase 43 family.

It is found in the golgi apparatus membrane. In terms of biological role, involved in the synthesis of glucuronoxylan hemicellulose in secondary cell walls. This Oryza sativa subsp. japonica (Rice) protein is Probable glucuronosyltransferase Os10g0205300.